Here is a 113-residue protein sequence, read N- to C-terminus: uncharacterized protein (113 aa).

This is an uncharacterized protein from Bacillus subtilis (strain 168).